The primary structure comprises 479 residues: UDP-N-acetylmuramoyl-L-alanyl-D-glutamate--2,6-diaminopimelate ligase (479 aa).

S21 contacts UDP-N-acetyl-alpha-D-muramoyl-L-alanyl-D-glutamate. 98-104 (GTNGKSS) contributes to the ATP binding site. Residues 144 to 145 (TT), S171, Q177, and R179 contribute to the UDP-N-acetyl-alpha-D-muramoyl-L-alanyl-D-glutamate site. Residue K211 is modified to N6-carboxylysine. Residues R372, 396-399 (DNPR), G446, and E450 contribute to the meso-2,6-diaminopimelate site. A Meso-diaminopimelate recognition motif motif is present at residues 396–399 (DNPR).

The protein belongs to the MurCDEF family. MurE subfamily. It depends on Mg(2+) as a cofactor. Carboxylation is probably crucial for Mg(2+) binding and, consequently, for the gamma-phosphate positioning of ATP.

The protein resides in the cytoplasm. The catalysed reaction is UDP-N-acetyl-alpha-D-muramoyl-L-alanyl-D-glutamate + meso-2,6-diaminopimelate + ATP = UDP-N-acetyl-alpha-D-muramoyl-L-alanyl-gamma-D-glutamyl-meso-2,6-diaminopimelate + ADP + phosphate + H(+). It participates in cell wall biogenesis; peptidoglycan biosynthesis. In terms of biological role, catalyzes the addition of meso-diaminopimelic acid to the nucleotide precursor UDP-N-acetylmuramoyl-L-alanyl-D-glutamate (UMAG) in the biosynthesis of bacterial cell-wall peptidoglycan. The protein is UDP-N-acetylmuramoyl-L-alanyl-D-glutamate--2,6-diaminopimelate ligase of Rickettsia conorii (strain ATCC VR-613 / Malish 7).